A 320-amino-acid polypeptide reads, in one-letter code: tRNA pseudouridine synthase B (320 aa).

The Nucleophile role is filled by D48.

This sequence belongs to the pseudouridine synthase TruB family. Type 1 subfamily.

The enzyme catalyses uridine(55) in tRNA = pseudouridine(55) in tRNA. Its function is as follows. Responsible for synthesis of pseudouridine from uracil-55 in the psi GC loop of transfer RNAs. This is tRNA pseudouridine synthase B from Mycobacterium leprae (strain TN).